The chain runs to 189 residues: Small ribosomal subunit protein uS5 (189 aa).

The S5 DRBM domain maps to 22–85; sequence FVDKLVAINR…EAAKRDLIFV (64 aa).

It belongs to the universal ribosomal protein uS5 family. Part of the 30S ribosomal subunit. Contacts proteins S4 and S8.

Functionally, with S4 and S12 plays an important role in translational accuracy. Its function is as follows. Located at the back of the 30S subunit body where it stabilizes the conformation of the head with respect to the body. In Sinorhizobium fredii (strain NBRC 101917 / NGR234), this protein is Small ribosomal subunit protein uS5.